Here is a 244-residue protein sequence, read N- to C-terminus: GTP cyclohydrolase 1 type 2 homolog (244 aa).

A divalent metal cation contacts are provided by H65, H66, D102, H216, and E220.

The protein belongs to the GTP cyclohydrolase I type 2/NIF3 family. In terms of assembly, homohexamer; trimer of dimers, that forms a hollow cage-like architecture.

Its function is as follows. DNA-binding protein exhibiting the ability to bind to both single-stranded and double-stranded DNA. The chain is GTP cyclohydrolase 1 type 2 homolog from Methanocaldococcus jannaschii (strain ATCC 43067 / DSM 2661 / JAL-1 / JCM 10045 / NBRC 100440) (Methanococcus jannaschii).